The primary structure comprises 220 residues: Protein-L-isoaspartate O-methyltransferase (220 aa).

Ser-64 is an active-site residue.

It belongs to the methyltransferase superfamily. L-isoaspartyl/D-aspartyl protein methyltransferase family.

Its subcellular location is the cytoplasm. The enzyme catalyses [protein]-L-isoaspartate + S-adenosyl-L-methionine = [protein]-L-isoaspartate alpha-methyl ester + S-adenosyl-L-homocysteine. In terms of biological role, catalyzes the methyl esterification of L-isoaspartyl residues in peptides and proteins that result from spontaneous decomposition of normal L-aspartyl and L-asparaginyl residues. It plays a role in the repair and/or degradation of damaged proteins. The sequence is that of Protein-L-isoaspartate O-methyltransferase from Methanoculleus marisnigri (strain ATCC 35101 / DSM 1498 / JR1).